We begin with the raw amino-acid sequence, 526 residues long: Na(+)/H(+) antiporter NhaB (526 aa).

The next 11 helical transmembrane spans lie at 14–34 (FLGY…LVNP), 63–83 (CYPL…GMTS), 99–119 (MLLV…LFVF), 122–142 (LLLR…AAAF), 146–166 (FLDA…FYGI), 206–226 (LLMH…VGEP), 239–259 (FVSF…CGIL), 307–327 (AVIG…VGLI), 357–377 (FTAL…QQLF), 451–471 (ATPN…APLI), and 479–499 (VIMA…CVEF).

The protein belongs to the NhaB Na(+)/H(+) (TC 2.A.34) antiporter family.

It localises to the cell inner membrane. It catalyses the reaction 2 Na(+)(in) + 3 H(+)(out) = 2 Na(+)(out) + 3 H(+)(in). Its function is as follows. Na(+)/H(+) antiporter that extrudes sodium in exchange for external protons. This chain is Na(+)/H(+) antiporter NhaB, found in Pectobacterium carotovorum subsp. carotovorum (strain PC1).